Reading from the N-terminus, the 433-residue chain is Succinate--CoA ligase [GDP-forming] subunit beta, mitochondrial (433 aa).

The N-terminal 38 residues, 1–38 (IPAAPVAAQARKLLRDLAFRPPLLAARSQVVQLTPRRW), are a transit peptide targeting the mitochondrion. Positions 47–275 (KKLMSDNGVK…NAEFRQKDIF (229 aa)) constitute an ATP-grasp domain. Residue Gln-58 participates in GTP binding. N6-acetyllysine is present on Lys-74. Lys-79 carries the post-translational modification N6-succinyllysine. 91–93 (GRG) lines the GTP pocket. Lys-133 and Lys-140 each carry N6-acetyllysine. Residue Leu-147 participates in GTP binding. Phosphoserine is present on Ser-162. Lys-201 and Lys-228 each carry N6-acetyllysine. The Mg(2+) site is built by Asn-244 and Asp-258. N6-acetyllysine is present on residues Lys-272 and Lys-292. Asn-309 contacts substrate. Lys-339 is modified (N6-succinyllysine). Lys-348 is modified (N6-acetyllysine). A substrate-binding site is contributed by 366–368 (GIV). Lys-387 and Lys-424 each carry N6-acetyllysine.

Belongs to the succinate/malate CoA ligase beta subunit family. GTP-specific subunit beta subfamily. In terms of assembly, heterodimer of an alpha and a beta subunit. The beta subunit determines specificity for GTP. It depends on Mg(2+) as a cofactor.

It localises to the mitochondrion. It carries out the reaction GTP + succinate + CoA = succinyl-CoA + GDP + phosphate. Its pathway is carbohydrate metabolism; tricarboxylic acid cycle; succinate from succinyl-CoA (ligase route): step 1/1. In terms of biological role, GTP-specific succinyl-CoA synthetase functions in the citric acid cycle (TCA), coupling the hydrolysis of succinyl-CoA to the synthesis of GTP and thus represents the only step of substrate-level phosphorylation in the TCA. The beta subunit provides nucleotide specificity of the enzyme and binds the substrate succinate, while the binding sites for coenzyme A and phosphate are found in the alpha subunit. This is Succinate--CoA ligase [GDP-forming] subunit beta, mitochondrial from Sus scrofa (Pig).